The sequence spans 148 residues: IPYNPQSQGVVESMNKELKKIIGQVRDQAEHLKTAVQMAVFIHNFKRKGGIGGYSAGERIIDIIATDIQTKELQKQITKIQNFRVYYRDSRDPIWKGPAKLLWKGEGAVVIQDNSDIKVVPRRKVKIIRDYGKQMAGDDCVASRQDED.

The 64-residue stretch at I1–I64 folds into the Integrase catalytic domain. E12 contributes to the Mg(2+) binding site. A DNA-binding region (integrase-type) is located at residues F83–D130.

In terms of assembly, homotetramer; may further associate as a homohexadecamer. Part of the pre-integration complex (PIC) which is composed of viral genome, matrix protein, Vpr and integrase. Interacts with human SMARCB1/INI1 and human PSIP1/LEDGF isoform 1. Interacts with human KPNA3; this interaction might play a role in nuclear import of the pre-integration complex. Interacts with human NUP153; this interaction might play a role in nuclear import of the pre-integration complex. In terms of processing, specific enzymatic cleavages by the viral protease yield mature proteins.

Its function is as follows. Catalyzes viral DNA integration into the host chromosome, by performing a series of DNA cutting and joining reactions. This enzyme activity takes place after virion entry into a cell and reverse transcription of the RNA genome in dsDNA. The first step in the integration process is 3' processing. This step requires a complex comprising the viral genome, matrix protein, Vpr and integrase. This complex is called the pre-integration complex (PIC). The integrase protein removes 2 nucleotides from each 3' end of the viral DNA, leaving recessed CA OH's at the 3' ends. In the second step, the PIC enters cell nucleus. This process is mediated through integrase and Vpr proteins, and allows the virus to infect a non dividing cell. This ability to enter the nucleus is specific of lentiviruses, other retroviruses cannot and rely on cell division to access cell chromosomes. In the third step, termed strand transfer, the integrase protein joins the previously processed 3' ends to the 5' ends of strands of target cellular DNA at the site of integration. The 5'-ends are produced by integrase-catalyzed staggered cuts, 5 bp apart. A Y-shaped, gapped, recombination intermediate results, with the 5'-ends of the viral DNA strands and the 3' ends of target DNA strands remaining unjoined, flanking a gap of 5 bp. The last step is viral DNA integration into host chromosome. This involves host DNA repair synthesis in which the 5 bp gaps between the unjoined strands are filled in and then ligated. Since this process occurs at both cuts flanking the HIV genome, a 5 bp duplication of host DNA is produced at the ends of HIV-1 integration. Alternatively, Integrase may catalyze the excision of viral DNA just after strand transfer, this is termed disintegration. This chain is Gag-Pol polyprotein (gag-pol), found in Homo sapiens (Human).